Consider the following 147-residue polypeptide: UPF0306 protein YPK_3704 (147 aa).

Belongs to the UPF0306 family.

The sequence is that of UPF0306 protein YPK_3704 from Yersinia pseudotuberculosis serotype O:3 (strain YPIII).